A 560-amino-acid polypeptide reads, in one-letter code: Developmental and secondary metabolism regulator veA (560 aa).

One can recognise a Velvet domain in the interval 35–241 (GRRLWYRMRV…AEQGCRVRIR (207 aa)). The Nuclear localization signal signature appears at 49 to 54 (ERARAC). Disordered stretches follow at residues 49–70 (ERARACGSGPKSSADRRPVDPP), 171–197 (KEDKDKDKERDVESQPPLTGLSPATGG), and 250–560 (DGKG…RLRY). Residues 171 to 183 (KEDKDKDKERDVE) show a composition bias toward basic and acidic residues. Residues 336–355 (AAPPQPFAQPPSVPASPVYP) are compositionally biased toward pro residues. A compositionally biased stretch (basic and acidic residues) spans 395-405 (PRRESIHHDYR). Residues 411–439 (QLPPLPPPPYYPPTPQQSHMPPPQPPQVL) are compositionally biased toward pro residues. Residues 444 to 453 (IDSNSKSNNR) show a composition bias toward polar residues. The interval 455 to 496 (PMPSPTALANSAPRPLASLAPLAPLMQSTSSSAGKGPVHPAT) is PEST. Residues 461–479 (ALANSAPRPLASLAPLAPL) show a composition bias toward low complexity. Basic and acidic residues-rich tracts occupy residues 508 to 535 (RAHDESFWSEPEHGRYQNGTRDKGRSED) and 546 to 560 (RRADGTEADGIRLRY).

The protein belongs to the velvet family. VeA subfamily. Component of the heterotrimeric velvet complex composed of laeA, veA and velB; VeA acting as a bridging protein between laeA and velB.

The protein localises to the nucleus. It is found in the cytoplasm. Component of the velvet transcription factor complex that controls sexual/asexual developmental ratio in response to light, promoting sexual development in the darkness while stimulating asexual sporulation under illumination. The velvet complex acts as a global regulator for secondary metabolite gene expression. Positively regulates chaetoglobosin A biosynthesis by controlling the expression of core genes of the chaetoglobosin A biosynthetic gene cluster and other relevant regulators in a light-dependent manner. VeA directly regulates transcription factors brlA, laeA, and the chaetoglobosin A cluster-specific transcription regulator cheR. Also directly regulates the expression of one of the chaetoglobosin A cluster cytochrome P450 monooxygenases (cheE or cheG), but only indirectly regulates the expression of the PKS-NRPS hybrid cheA. Moreover, VeA has a significant effect on the asexual spores production, irrespective of light or dark condition. This Chaetomium globosum (strain ATCC 6205 / CBS 148.51 / DSM 1962 / NBRC 6347 / NRRL 1970) (Soil fungus) protein is Developmental and secondary metabolism regulator veA.